Reading from the N-terminus, the 953-residue chain is Scaffold attachment factor B2 (953 aa).

Residues 1–29 (MAETLPGSGDSGPGTASLGPGVAETGTRR) are disordered. Ala2 is modified (N-acetylalanine). An SAP domain is found at 30-64 (LSELRVIDLRAELKKRNLDTGGNKSVLMERLKKAV). Ser54 carries the post-translational modification Phosphoserine. Lys65 participates in a covalent cross-link: Glycyl lysine isopeptide (Lys-Gly) (interchain with G-Cter in SUMO1); alternate. Lys65 is covalently cross-linked (Glycyl lysine isopeptide (Lys-Gly) (interchain with G-Cter in SUMO2); alternate). The interval 91–114 (KGLKMEEEGTEDNGLEDDSRDGQE) is disordered. Residue Lys94 forms a Glycyl lysine isopeptide (Lys-Gly) (interchain with G-Cter in SUMO2) linkage. A compositionally biased stretch (acidic residues) spans 98-114 (EGTEDNGLEDDSRDGQE). Phosphoserine is present on residues Ser109 and Ser158. Glycyl lysine isopeptide (Lys-Gly) (interchain with G-Cter in SUMO2) cross-links involve residues Lys188 and Lys199. The residue at position 201 (Thr201) is a Phosphothreonine. A Phosphoserine modification is found at Ser207. Residues 219-404 (ILGETCKSEP…KDEKGRVGSG (186 aa)) are disordered. Residues 224 to 233 (CKSEPVKEES) show a composition bias toward basic and acidic residues. Lys230 is covalently cross-linked (Glycyl lysine isopeptide (Lys-Gly) (interchain with G-Cter in SUMO)). Positions 274–285 (SESTAHAQSSKA) are enriched in polar residues. Positions 292–308 (VKREPAEQPGDGERTDC) are enriched in basic and acidic residues. Residue Lys293 forms a Glycyl lysine isopeptide (Lys-Gly) (interchain with G-Cter in SUMO) linkage. Low complexity predominate over residues 318-329 (EQSSAASELAEA). Positions 345–358 (EARDSKEDGRKFDF) are enriched in basic and acidic residues. The span at 370–382 (ESSTSEGADQKMS) shows a compositional bias: polar residues. Glycyl lysine isopeptide (Lys-Gly) (interchain with G-Cter in SUMO2) cross-links involve residues Lys380, Lys385, Lys388, Lys391, and Lys395. Residues 383 to 400 (SFKEEKDIKPIIKDEKGR) are compositionally biased toward basic and acidic residues. The RRM domain occupies 407 to 485 (RNLWVSGLSS…RMISVEKAKN (79 aa)). 2 positions are modified to phosphoserine: Ser507 and Ser513. Residues Lys517, Lys524, Lys525, Lys541, Lys542, and Lys551 each participate in a glycyl lysine isopeptide (Lys-Gly) (interchain with G-Cter in SUMO2) cross-link. Basic and acidic residues predominate over residues 525 to 551 (KEEKIEKKEEKKPEDIKKEEKDQDELK). 2 disordered regions span residues 525–665 (KEEK…RLQR) and 684–953 (RERL…TRRY). The segment covering 555–564 (TNRSRVTKSG) has biased composition (polar residues). Basic and acidic residues predominate over residues 567–579 (GMERTVVMDKSKG). Glycyl lysine isopeptide (Lys-Gly) (interchain with G-Cter in SUMO2) cross-links involve residues Lys578, Lys586, and Lys608. Composition is skewed to basic and acidic residues over residues 590–665 (RSKE…RLQR) and 684–820 (RERL…DSRD). The segment at 600–953 (DRKSESKEKR…PPYPHFTRRY (354 aa)) is interaction with SAFB1. Lys616 participates in a covalent cross-link: Glycyl lysine isopeptide (Lys-Gly) (interchain with G-Cter in SUMO2); alternate. Residue Lys616 is modified to N6-acetyllysine; alternate. The short motif at 713-730 (RRQQEQLRYEQERRPGRR) is the Nuclear localization signal element. 2 positions are modified to phosphoserine: Ser787 and Ser832. The segment covering 843 to 859 (GGRDWGEHNQRLEEHQA) has biased composition (basic and acidic residues). Residues 881 to 890 (GERGLSGPSG) are compositionally biased toward gly residues. Ser886 carries the post-translational modification Phosphoserine. Arg897 and Arg903 each carry omega-N-methylarginine. Residues 899–927 (GVAGRGGFAQGGHSQGHVVPGGGLEGGGV) are compositionally biased toward gly residues.

Interacts with SAFB/SAFB1 and SCAM1. Interacts with isoform 2 SRPK1 and inhibits its activity. Expressed at high levels in the CNS and at low levels in the liver. Expressed in a wide number of breast cancer cell lines.

It is found in the cytoplasm. It localises to the nucleus. Binds to scaffold/matrix attachment region (S/MAR) DNA. Can function as an estrogen receptor corepressor and can also inhibit cell proliferation. In Homo sapiens (Human), this protein is Scaffold attachment factor B2 (SAFB2).